Reading from the N-terminus, the 113-residue chain is Hydrogenase maturation factor HypA (113 aa).

Position 2 (His-2) interacts with Ni(2+). Residues Cys-70, Cys-73, Cys-86, and Cys-88 each coordinate Zn(2+).

Belongs to the HypA/HybF family.

Its function is as follows. Involved in the maturation of [NiFe] hydrogenases. Required for nickel insertion into the metal center of the hydrogenase. This Nostoc sp. (strain PCC 7120 / SAG 25.82 / UTEX 2576) protein is Hydrogenase maturation factor HypA.